A 684-amino-acid polypeptide reads, in one-letter code: Threonine--tRNA ligase (684 aa).

The TGS domain occupies 1–60; sequence MSISITLHRSGTSRTQQVDTTTTGLDLFGSDRAVVAMRVDGNLVDLQRELHDGAEVEPVE. The interval 256-567 is catalytic; it reads DHRKLGAELD…LTEHYAGAFP (312 aa). Residues Cys361, His412, and His544 each coordinate Zn(2+).

It belongs to the class-II aminoacyl-tRNA synthetase family. Homodimer. The cofactor is Zn(2+).

It localises to the cytoplasm. The enzyme catalyses tRNA(Thr) + L-threonine + ATP = L-threonyl-tRNA(Thr) + AMP + diphosphate + H(+). Its function is as follows. Catalyzes the attachment of threonine to tRNA(Thr) in a two-step reaction: L-threonine is first activated by ATP to form Thr-AMP and then transferred to the acceptor end of tRNA(Thr). Also edits incorrectly charged L-seryl-tRNA(Thr). The polypeptide is Threonine--tRNA ligase (Cutibacterium acnes (strain DSM 16379 / KPA171202) (Propionibacterium acnes)).